The primary structure comprises 447 residues: Phosphoglucosamine mutase (447 aa).

The active-site Phosphoserine intermediate is Ser-104. Mg(2+) contacts are provided by Ser-104, Asp-243, Asp-245, and Asp-247. Phosphoserine is present on Ser-104.

The protein belongs to the phosphohexose mutase family. Mg(2+) is required as a cofactor. In terms of processing, activated by phosphorylation.

It carries out the reaction alpha-D-glucosamine 1-phosphate = D-glucosamine 6-phosphate. Functionally, catalyzes the conversion of glucosamine-6-phosphate to glucosamine-1-phosphate. The chain is Phosphoglucosamine mutase from Corynebacterium jeikeium (strain K411).